We begin with the raw amino-acid sequence, 51 residues long: FVNQHLCGSHLVEALYLVCGNDGFFYRPKAGIVDQCCTGVCSLYQLQNYCN.

3 cysteine pairs are disulfide-bonded: Cys-7–Cys-37, Cys-19–Cys-50, and Cys-36–Cys-41.

Belongs to the insulin family. As to quaternary structure, heterodimer of a B chain and an A chain linked by two disulfide bonds.

It localises to the secreted. Functionally, insulin decreases blood glucose concentration. It increases cell permeability to monosaccharides, amino acids and fatty acids. It accelerates glycolysis, the pentose phosphate cycle, and glycogen synthesis in liver. This is Insulin (INS) from Hystrix cristata (North African crested porcupine).